Here is a 239-residue protein sequence, read N- to C-terminus: Wilms tumor protein homolog (239 aa).

The 9aaTAD motif lies at 43-51; the sequence is MTWNQMNLG. 3 consecutive C2H2-type zinc fingers follow at residues 113–137, 143–167, and 173–195; these read FMCAYPGCNKRYFKLSHLQMHSRKH, YQCDFKDCERRFSRSDQLKRHQRRH, and FQCKTCQRKFSRSDHLKTHTRTH. 2 important for interaction with target DNA regions span residues 157 to 171 and 183 to 191; these read SDQLKRHQRRHTGVK and SRSDHLKTH. The short motif at 198–200 is the KTS motif element; sequence KTS. A C2H2-type 4 zinc finger spans residues 204–228; it reads FSCRWPSCQKKFARSDELVRHHNMH. A Glycyl lysine isopeptide (Lys-Gly) (interchain with G-Cter in SUMO2) cross-link involves residue Lys-234.

This sequence belongs to the EGR C2H2-type zinc-finger protein family. In terms of assembly, interacts with ZNF224 via the zinc-finger region. Interacts with WTAP, AMER1 and SRY. Homodimer. Interacts with WTIP. Interacts with actively translating polysomes. Detected in nuclear ribonucleoprotein (mRNP) particles. Interacts with U2AF2. Interacts with HNRNPU via the zinc-finger region. Interacts with CITED2.

The protein resides in the nucleus speckle. It localises to the nucleus. Its subcellular location is the nucleoplasm. It is found in the cytoplasm. Transcription factor that plays an important role in cellular development and cell survival. Recognizes and binds to the DNA sequence 5'-GCG(T/G)GGGCG-3'. Regulates the expression of numerous target genes, including EPO. Plays an essential role for development of the urogenital system. It has a tumor suppressor as well as an oncogenic role in tumor formation. Function may be isoform-specific: isoforms lacking the KTS motif may act as transcription factors. Isoforms containing the KTS motif may bind mRNA and play a role in mRNA metabolism or splicing. The sequence is that of Wilms tumor protein homolog (WT1) from Sminthopsis macroura (Stripe-faced dunnart).